The sequence spans 178 residues: Acireductone dioxygenase (178 aa).

Residues His-87, His-89, Glu-93, and His-132 each coordinate Fe(2+). 4 residues coordinate Ni(2+): His-87, His-89, Glu-93, and His-132.

This sequence belongs to the acireductone dioxygenase (ARD) family. The cofactor is Fe(2+). Requires Ni(2+) as cofactor.

It is found in the cytoplasm. The protein localises to the nucleus. The catalysed reaction is 1,2-dihydroxy-5-(methylsulfanyl)pent-1-en-3-one + O2 = 4-methylsulfanyl-2-oxobutanoate + formate + 2 H(+). It carries out the reaction 1,2-dihydroxy-5-(methylsulfanyl)pent-1-en-3-one + O2 = 3-(methylsulfanyl)propanoate + CO + formate + 2 H(+). The protein operates within amino-acid biosynthesis; L-methionine biosynthesis via salvage pathway; L-methionine from S-methyl-5-thio-alpha-D-ribose 1-phosphate: step 5/6. Functionally, catalyzes 2 different reactions between oxygen and the acireductone 1,2-dihydroxy-3-keto-5-methylthiopentene (DHK-MTPene) depending upon the metal bound in the active site. Fe-containing acireductone dioxygenase (Fe-ARD) produces formate and 2-keto-4-methylthiobutyrate (KMTB), the alpha-ketoacid precursor of methionine in the methionine recycle pathway. Ni-containing acireductone dioxygenase (Ni-ARD) produces methylthiopropionate, carbon monoxide and formate, and does not lie on the methionine recycle pathway. This is Acireductone dioxygenase from Candida albicans (strain SC5314 / ATCC MYA-2876) (Yeast).